Consider the following 480-residue polypeptide: Iroquois-class homeodomain protein IRX-1 (480 aa).

Positions 125 to 188 form a DNA-binding region, homeobox; TALE-type; the sequence is YGDPGRPKNA…ANARRRLKKE (64 aa). Disordered stretches follow at residues 190–268, 280–354, and 401–480; these read KVTW…QGSP, SPLG…PLQH, and PHGP…LPSA. Residues 210–228 show a composition bias toward acidic residues; sequence TEGDPEKAEDDEEIDLESI. A compositionally biased stretch (basic and acidic residues) spans 229–239; the sequence is DIDKIDEHDGD. Serine 241 bears the Phosphoserine mark. Composition is skewed to low complexity over residues 252-262 and 340-351; these read PHAPAAPSALA and HPGAHGPSAGAP. Residues 404–417 show a composition bias toward pro residues; it reads PHLPAPPPPQPPVA.

The protein belongs to the TALE/IRO homeobox family.

It localises to the nucleus. In Homo sapiens (Human), this protein is Iroquois-class homeodomain protein IRX-1 (IRX1).